We begin with the raw amino-acid sequence, 262 residues long: Small ribosomal subunit protein eS4 (262 aa).

The 64-residue stretch at Leu-42–Val-105 folds into the S4 RNA-binding domain. Positions Gly-178–Lys-211 constitute a KOW domain.

This sequence belongs to the eukaryotic ribosomal protein eS4 family. As to quaternary structure, component of the small ribosomal subunit. Mature ribosomes consist of a small (40S) and a large (60S) subunit. The 40S subunit contains about 32 different proteins and 1 molecule of RNA (18S). The 60S subunit contains 45 different proteins and 3 molecules of RNA (25S, 5.8S and 5S).

It is found in the cytoplasm. In terms of biological role, component of the ribosome, a large ribonucleoprotein complex responsible for the synthesis of proteins in the cell. The small ribosomal subunit (SSU) binds messenger RNAs (mRNAs) and translates the encoded message by selecting cognate aminoacyl-transfer RNA (tRNA) molecules. The large subunit (LSU) contains the ribosomal catalytic site termed the peptidyl transferase center (PTC), which catalyzes the formation of peptide bonds, thereby polymerizing the amino acids delivered by tRNAs into a polypeptide chain. The nascent polypeptides leave the ribosome through a tunnel in the LSU and interact with protein factors that function in enzymatic processing, targeting, and the membrane insertion of nascent chains at the exit of the ribosomal tunnel. This chain is Small ribosomal subunit protein eS4 (RPS42), found in Candida albicans (strain SC5314 / ATCC MYA-2876) (Yeast).